A 541-amino-acid chain; its full sequence is Calcium-dependent protein kinase 26 (541 aa).

Residues 1-11 show a composition bias toward gly residues; sequence MGQCCTGGGKA. Positions 1-74 are disordered; it reads MGQCCTGGGK…AGPIGEVLER (74 aa). A lipid anchor (N-myristoyl glycine) is attached at glycine 2. Residues 38–67 show a composition bias toward low complexity; it reads AKQQPCSPAAKAAATEAAAAASSSKKPAGP. Residues 83–341 enclose the Protein kinase domain; that stretch reads YSIGKELGRG…AFQVLNHPWI (259 aa). Residues 89-97 and lysine 112 each bind ATP; that span reads LGRGQFGVT. Aspartate 207 (proton acceptor) is an active-site residue. An autoinhibitory domain region spans residues 347–377; it reads APDVPLDNVVLNRLKQFRAMNQFKKAALRII. 4 EF-hand domains span residues 384–419, 420–455, 456–491, and 493–526; these read EEIK…QGTK, FSDN…MNKM, DREE…QGLY, and ANEI…GSGC. Residues aspartate 397, aspartate 399, serine 401, threonine 403, glutamate 408, aspartate 433, aspartate 435, asparagine 437, glutamate 444, aspartate 469, aspartate 471, serine 473, tyrosine 475, glutamate 480, aspartate 504, asparagine 506, aspartate 508, arginine 510, and glutamate 515 each coordinate Ca(2+).

It belongs to the protein kinase superfamily. Ser/Thr protein kinase family. CDPK subfamily. As to expression, specifically expressed in heading panicles, spikelets and mature pollen grains. Not expressed in vegetative tissues.

The protein resides in the membrane. The enzyme catalyses L-seryl-[protein] + ATP = O-phospho-L-seryl-[protein] + ADP + H(+). The catalysed reaction is L-threonyl-[protein] + ATP = O-phospho-L-threonyl-[protein] + ADP + H(+). With respect to regulation, activated by calcium. Autophosphorylation may play an important role in the regulation of the kinase activity. May play a role in signal transduction pathways that involve calcium as a second messenger. This is Calcium-dependent protein kinase 26 from Oryza sativa subsp. japonica (Rice).